A 412-amino-acid polypeptide reads, in one-letter code: MSFIEKEDKAVFEAIQNEYNRQNNNIELIASENFVSEAVMEAQGSVLTNKYAEGYPGRRYYGGCQYVDITETLAIERAKELFGAEHVNVQPHSGSQANMAVYLVALDHGDTVLGMNLSHGGHLTHGSPVNFSGKFYNFVEYGVDKETERIDYEEVRRLAKENKPKLIVAGASAYPREIDFKKFKEIADEVGAKLMVDMAHIAGLVAAGLHQNPVDYADFVTTTTHKTLRGPRGGMILTKEEYAKQIDKTIFPGIQGGPLEHVIAAKAVAFGEALNPDFKDYQEQVVKNAKALADTLIEEGFRVVSGGTDNHLVAVDVKGSFGITGKEAEEALDEVGITCNKNTIPFDQEKPFVTSGLRLGTPAATTRGFEEADFEEVAKIISLVVQNPKDEAKLKEASDRVAALTSKHPLYK.

(6S)-5,6,7,8-tetrahydrofolate is bound by residues Leu-117 and 121-123; that span reads GHL. N6-(pyridoxal phosphate)lysine is present on Lys-226. Glu-241 contributes to the (6S)-5,6,7,8-tetrahydrofolate binding site.

It belongs to the SHMT family. In terms of assembly, homodimer. Requires pyridoxal 5'-phosphate as cofactor.

The protein localises to the cytoplasm. The catalysed reaction is (6R)-5,10-methylene-5,6,7,8-tetrahydrofolate + glycine + H2O = (6S)-5,6,7,8-tetrahydrofolate + L-serine. It participates in one-carbon metabolism; tetrahydrofolate interconversion. Its pathway is amino-acid biosynthesis; glycine biosynthesis; glycine from L-serine: step 1/1. Functionally, catalyzes the reversible interconversion of serine and glycine with tetrahydrofolate (THF) serving as the one-carbon carrier. This reaction serves as the major source of one-carbon groups required for the biosynthesis of purines, thymidylate, methionine, and other important biomolecules. Also exhibits THF-independent aldolase activity toward beta-hydroxyamino acids, producing glycine and aldehydes, via a retro-aldol mechanism. This is Serine hydroxymethyltransferase from Staphylococcus carnosus (strain TM300).